Consider the following 445-residue polypeptide: Transcriptional enhancer factor TEF-4 (445 aa).

2 disordered regions span residues 1 to 47 (MGDP…VWSP) and 191 to 217 (PPAS…SPPA). Residues 25–37 (EGTGGSEGVGGDG) are compositionally biased toward gly residues. A DNA-binding region (TEA) is located at residues 38–114 (SPDAEGVWSP…QVLARRKSRE (77 aa)). The transcriptional activation stretch occupies residues 172–445 (WNVPDVKPFS…QYHIYRLVRD (274 aa)). Residues 199–216 (YEPPPALSPLPPPAPSPP) are compositionally biased toward pro residues.

In terms of assembly, interacts with YAP1 and WWTR1/TAZ. As to expression, highest expression in brain. High levels also found in lung, testis and ovarian follicle cells. Lower levels in heart and spleen.

Its subcellular location is the nucleus. Transcription factor which plays a key role in the Hippo signaling pathway, a pathway involved in organ size control and tumor suppression by restricting proliferation and promoting apoptosis. The core of this pathway is composed of a kinase cascade wherein MST1/MST2, in complex with its regulatory protein SAV1, phosphorylates and activates LATS1/2 in complex with its regulatory protein MOB1, which in turn phosphorylates and inactivates YAP1 oncoprotein and WWTR1/TAZ. Acts by mediating gene expression of YAP1 and WWTR1/TAZ, thereby regulating cell proliferation, migration and epithelial mesenchymal transition (EMT) induction. Binds to the SPH and GT-IIC 'enhansons' (5'-GTGGAATGT-3'). May be involved in the gene regulation of neural development. Binds to the M-CAT motif. In Mus musculus (Mouse), this protein is Transcriptional enhancer factor TEF-4 (Tead2).